Consider the following 68-residue polypeptide: Large ribosomal subunit protein uL29 (68 aa).

It belongs to the universal ribosomal protein uL29 family.

The protein is Large ribosomal subunit protein uL29 of Erythrobacter litoralis (strain HTCC2594).